The sequence spans 1015 residues: Putative calcium-transporting ATPase 7, plasma membrane-type (1015 aa).

Met-1 bears the N-acetylmethionine mark. Over 1–161 (MESYLNSNFD…NKFAESELRS (161 aa)) the chain is Cytoplasmic. The segment at 20 to 31 (VLEKWRNLCSVV) is interaction with calmodulin. Ser-45 is subject to Phosphoserine; by CPK. Residues 162–182 (FWVFVWEALQDMTLMILGVCA) traverse the membrane as a helical segment. Over 183–200 (FVSLIVGIATEGWPQGSH) the chain is Lumenal. A helical membrane pass occupies residues 201–221 (DGLGIVASILLVVFVTATSDY). Residues 222-349 (RQSLQFRDLD…DDETPLQVKL (128 aa)) lie on the Cytoplasmic side of the membrane. Residues 350–369 (NGVATIIGKIGLSFAIVTFA) form a helical membrane-spanning segment. Residues 370-399 (VLVQGMFMRKLSLGPHWWWSGDDALELLEY) are Lumenal-facing. The helical transmembrane segment at 400 to 417 (FAIAVTIVVVAVPEGLPL) threads the bilayer. Topologically, residues 418-811 (AVTLSLAFAM…KWGRSVYINI (394 aa)) are cytoplasmic. Residue Asp-455 is the 4-aspartylphosphate intermediate of the active site. Residues Asp-756 and Asp-760 each contribute to the Mg(2+) site. A helical membrane pass occupies residues 812 to 830 (QKFVQFQLTVNVVALIVNF). Residues 831-841 (SSACLTGSAPL) are Lumenal-facing. Residues 842–862 (TAVQLLWVNMIMDTLGALALA) traverse the membrane as a helical segment. The Cytoplasmic segment spans residues 863-882 (TEPPNNELMKRMPVGRRGNF). The chain crosses the membrane as a helical span at residues 883 to 905 (ITNAMWRNILGQAVYQFIIIWIL). At 906 to 917 (QAKGKSMFGLVG) the chain is on the lumenal side. Residues 918–939 (SDSTLVLNTLIFNCFVFCQVFN) form a helical membrane-spanning segment. The Cytoplasmic portion of the chain corresponds to 940–957 (EVSSREMEEIDVFKGILD). The chain crosses the membrane as a helical span at residues 958–979 (NYVFVVVIGATVFFQIIIIEFL). At 980–989 (GTFASTTPLT) the chain is on the lumenal side. A helical membrane pass occupies residues 990-1011 (IVQWFFSIFVGFLGMPIAAGLK). The Cytoplasmic segment spans residues 1012-1015 (KIPV).

The protein belongs to the cation transport ATPase (P-type) (TC 3.A.3) family. Type IIB subfamily.

Its subcellular location is the membrane. It catalyses the reaction Ca(2+)(in) + ATP + H2O = Ca(2+)(out) + ADP + phosphate + H(+). Its activity is regulated as follows. Activated by calmodulin. In terms of biological role, this magnesium-dependent enzyme catalyzes the hydrolysis of ATP coupled with the translocation of calcium from the cytosol out of the cell or into organelles. The chain is Putative calcium-transporting ATPase 7, plasma membrane-type (ACA7) from Arabidopsis thaliana (Mouse-ear cress).